We begin with the raw amino-acid sequence, 397 residues long: L-cysteine desulfidase (397 aa).

The active-site Proton acceptor is C23. [4Fe-4S] cluster contacts are provided by C288, C330, and C337.

The protein belongs to the L-cysteine desulfidase family. In terms of assembly, homotrimer. It depends on [4Fe-4S] cluster as a cofactor.

The catalysed reaction is L-cysteine + H2O = hydrogen sulfide + pyruvate + NH4(+) + H(+). Functionally, catalyzes the cleavage of L-cysteine to form 2-aminoprop-2-enoate and sulfide. The former then spontaneously hydrolyzes to pyruvate and NH(3). May be responsible for the production of sulfide required for the biosynthesis of iron-sulfur centers in this archaea. The polypeptide is L-cysteine desulfidase (Methanococcus maripaludis (strain C7 / ATCC BAA-1331)).